We begin with the raw amino-acid sequence, 514 residues long: ATP synthase subunit alpha (514 aa).

An ATP-binding site is contributed by 170–177; it reads GDRQIGKT.

This sequence belongs to the ATPase alpha/beta chains family. F-type ATPases have 2 components, CF(1) - the catalytic core - and CF(0) - the membrane proton channel. CF(1) has five subunits: alpha(3), beta(3), gamma(1), delta(1), epsilon(1). CF(0) has three main subunits: a(1), b(2) and c(9-12). The alpha and beta chains form an alternating ring which encloses part of the gamma chain. CF(1) is attached to CF(0) by a central stalk formed by the gamma and epsilon chains, while a peripheral stalk is formed by the delta and b chains.

Its subcellular location is the cell inner membrane. It catalyses the reaction ATP + H2O + 4 H(+)(in) = ADP + phosphate + 5 H(+)(out). Its function is as follows. Produces ATP from ADP in the presence of a proton gradient across the membrane. The alpha chain is a regulatory subunit. This Pseudomonas savastanoi pv. phaseolicola (strain 1448A / Race 6) (Pseudomonas syringae pv. phaseolicola (strain 1448A / Race 6)) protein is ATP synthase subunit alpha.